A 300-amino-acid polypeptide reads, in one-letter code: Probable mitochondrial 2-oxodicarboxylate carrier (300 aa).

Positions 1–20 are disordered; sequence MTSKGNAGNPPTPTPAPVKS. Solcar repeat units lie at residues 21 to 104, 114 to 200, and 209 to 295; these read QPLW…YEKQ, PTQM…IKSA, and GVLV…VMKL. 6 helical membrane passes run 27–47, 74–93, 120–140, 171–191, 209–229, and 278–298; these read LVSGGIAGVSEILVMYPLDVV, LKMYRGIVPPILVEAPKRAI, IGSGVLAGITEAFIVVPFELV, GFFKGLESTIWRHACWNGGYF, GVLVNNFIAGGLAGTFGTMLN, and LGPGGGILLVVNEFVMKLLAG.

This sequence belongs to the mitochondrial carrier (TC 2.A.29) family.

The protein resides in the mitochondrion inner membrane. The enzyme catalyses 2-oxoadipate(in) + 2-oxoglutarate(out) = 2-oxoadipate(out) + 2-oxoglutarate(in). The catalysed reaction is hexanedioate(in) + 2-oxoglutarate(out) = hexanedioate(out) + 2-oxoglutarate(in). It carries out the reaction L-2-aminoadipate(in) + 2-oxoglutarate(out) = L-2-aminoadipate(out) + 2-oxoglutarate(in). It catalyses the reaction glutarate(in) + 2-oxoglutarate(out) = glutarate(out) + 2-oxoglutarate(in). The enzyme catalyses 2-oxoheptanedioate(in) + 2-oxoglutarate(out) = 2-oxoheptanedioate(out) + 2-oxoglutarate(in). The catalysed reaction is heptanedioate(in) + 2-oxoglutarate(out) = heptanedioate(out) + 2-oxoglutarate(in). It carries out the reaction citrate(in) + 2-oxoglutarate(out) = citrate(out) + 2-oxoglutarate(in). Transports dicarboxylates across the inner membranes of mitochondria by a counter-exchange mechanism. Can transport 2-oxoadipate (2-oxohexanedioate), 2-oxoglutarate, adipate (hexanedioate), glutarate, and to a lesser extent, pimelate (heptanedioate), 2-oxopimelate (2-oxoheptanedioate), 2-aminoadipate (2-aminohexanedioate), oxaloacetate, and citrate. Plays a central role in catabolism of lysine, hydroxylysine, and tryptophan, by transporting common metabolite intermediates (such as 2-oxoadipate) into the mitochondria, where it is converted into acetyl-CoA and can enter the citric acid (TCA) cycle. This Dictyostelium discoideum (Social amoeba) protein is Probable mitochondrial 2-oxodicarboxylate carrier (mcfT).